Here is an 881-residue protein sequence, read N- to C-terminus: Sodium/sulfate cotransporter 1 (881 aa).

Transmembrane regions (helical) follow at residues 8–28 (GIVA…DWVG), 31–51 (ITFT…VTVA), 61–81 (GLLT…TGGL), 107–127 (MVLS…PILI), 140–160 (LLIP…IGTS), and 186–206 (IFDI…FILL). RCK C-terminal domains follow at residues 212-296 (LPGN…EYGL), 318-402 (VFSA…IKTN), 407-492 (LHAV…FPGL), and 498-584 (EQVD…DKSF). A run of 6 helical transmembrane segments spans residues 601–621 (MIIG…GGLK), 625–645 (YIHL…TGCM), 658–678 (VYLT…TGVA), 684–704 (AIIS…AIYI), 775–795 (FAIV…FILV), and 803–823 (VWIV…LYFL). The disordered stretch occupies residues 854-881 (SLRRQVSHTRTDDSGSSGSPLPAPKIVA).

The protein belongs to the divalent anion:Na+ symporter (DASS) superfamily. Na+/sulfate symporter (TC 2.A.47.4) family.

Its subcellular location is the cell membrane. Na(+)/sulfate cotransporter with a probable high-affinity for sulfate and a proteasome dependent turnover. This chain is Sodium/sulfate cotransporter 1 (SLT1), found in Chlamydomonas reinhardtii (Chlamydomonas smithii).